The primary structure comprises 1221 residues: DNA-directed RNA polymerase subunit beta (1221 aa).

A disordered region spans residues E1176–K1221. The segment covering E1183 to D1215 has biased composition (acidic residues).

Belongs to the RNA polymerase beta chain family. In terms of assembly, the RNAP catalytic core consists of 2 alpha, 1 beta, 1 beta' and 1 omega subunit. When a sigma factor is associated with the core the holoenzyme is formed, which can initiate transcription.

The enzyme catalyses RNA(n) + a ribonucleoside 5'-triphosphate = RNA(n+1) + diphosphate. Its function is as follows. DNA-dependent RNA polymerase catalyzes the transcription of DNA into RNA using the four ribonucleoside triphosphates as substrates. In Lactobacillus delbrueckii subsp. bulgaricus (strain ATCC 11842 / DSM 20081 / BCRC 10696 / JCM 1002 / NBRC 13953 / NCIMB 11778 / NCTC 12712 / WDCM 00102 / Lb 14), this protein is DNA-directed RNA polymerase subunit beta.